The sequence spans 65 residues: Metallothionein-B (65 aa).

The protein belongs to the metallothionein superfamily. Type 4 family.

In terms of biological role, metallothioneins have a high content of cysteine residues that bind various heavy metals. In Strongylocentrotus purpuratus (Purple sea urchin), this protein is Metallothionein-B (MTB1).